The following is a 136-amino-acid chain: Large ribosomal subunit protein uL16 (136 aa).

It belongs to the universal ribosomal protein uL16 family. As to quaternary structure, part of the 50S ribosomal subunit.

Binds 23S rRNA and is also seen to make contacts with the A and possibly P site tRNAs. The sequence is that of Large ribosomal subunit protein uL16 from Rickettsia typhi (strain ATCC VR-144 / Wilmington).